Here is a 385-residue protein sequence, read N- to C-terminus: 8-amino-7-oxononanoate synthase (385 aa).

Arg-21 contacts substrate. 108-109 (GF) contacts pyridoxal 5'-phosphate. A substrate-binding site is contributed by His-133. 3 residues coordinate pyridoxal 5'-phosphate: Ser-179, His-207, and Thr-233. N6-(pyridoxal phosphate)lysine is present on Lys-236. Residue Thr-352 coordinates substrate.

Belongs to the class-II pyridoxal-phosphate-dependent aminotransferase family. BioF subfamily. In terms of assembly, homodimer. Pyridoxal 5'-phosphate is required as a cofactor.

The enzyme catalyses 6-carboxyhexanoyl-[ACP] + L-alanine + H(+) = (8S)-8-amino-7-oxononanoate + holo-[ACP] + CO2. It participates in cofactor biosynthesis; biotin biosynthesis. Functionally, catalyzes the decarboxylative condensation of pimeloyl-[acyl-carrier protein] and L-alanine to produce 8-amino-7-oxononanoate (AON), [acyl-carrier protein], and carbon dioxide. The polypeptide is 8-amino-7-oxononanoate synthase (Pseudescherichia vulneris (Escherichia vulneris)).